Reading from the N-terminus, the 359-residue chain is Peptide chain release factor 1 (359 aa).

N5-methylglutamine is present on glutamine 235. A compositionally biased stretch (basic and acidic residues) spans 283–294 (SKADEERSESRK). The disordered stretch occupies residues 283–309 (SKADEERSESRKSQVGSGDRSERIRTY).

This sequence belongs to the prokaryotic/mitochondrial release factor family. In terms of processing, methylated by PrmC. Methylation increases the termination efficiency of RF1.

The protein localises to the cytoplasm. Its function is as follows. Peptide chain release factor 1 directs the termination of translation in response to the peptide chain termination codons UAG and UAA. The protein is Peptide chain release factor 1 of Mesorhizobium japonicum (strain LMG 29417 / CECT 9101 / MAFF 303099) (Mesorhizobium loti (strain MAFF 303099)).